The sequence spans 185 residues: Peptidyl-tRNA hydrolase (185 aa).

TRNA is bound at residue Y14. The active-site Proton acceptor is the H19. 3 residues coordinate tRNA: Y64, N66, and N112.

Belongs to the PTH family. Monomer.

Its subcellular location is the cytoplasm. It carries out the reaction an N-acyl-L-alpha-aminoacyl-tRNA + H2O = an N-acyl-L-amino acid + a tRNA + H(+). Its function is as follows. Hydrolyzes ribosome-free peptidyl-tRNAs (with 1 or more amino acids incorporated), which drop off the ribosome during protein synthesis, or as a result of ribosome stalling. Functionally, catalyzes the release of premature peptidyl moieties from peptidyl-tRNA molecules trapped in stalled 50S ribosomal subunits, and thus maintains levels of free tRNAs and 50S ribosomes. The polypeptide is Peptidyl-tRNA hydrolase (Lactobacillus acidophilus (strain ATCC 700396 / NCK56 / N2 / NCFM)).